Here is a 421-residue protein sequence, read N- to C-terminus: Anhydromevalonate phosphate decarboxylase (421 aa).

Residues Asn131 and Glu194 each coordinate Mn(2+). The active-site Proton acceptor is Asp240.

This sequence belongs to the UbiD family. The cofactor is prenylated FMN. Mn(2+) is required as a cofactor.

It catalyses the reaction (2E)-3-methyl-5-phosphooxypent-2-enoate + H(+) = isopentenyl phosphate + CO2. It functions in the pathway isoprenoid biosynthesis; isopentenyl diphosphate biosynthesis via mevalonate pathway. Functionally, catalyzes the conversion of trans-anhydromevalonate 5-phosphate (tAHMP) into isopentenyl phosphate. Involved in the archaeal mevalonate (MVA) pathway, which provides fundamental precursors for isoprenoid biosynthesis, such as isopentenyl diphosphate (IPP) and dimethylallyl diphosphate (DMAPP). The polypeptide is Anhydromevalonate phosphate decarboxylase (Methanocaldococcus jannaschii (strain ATCC 43067 / DSM 2661 / JAL-1 / JCM 10045 / NBRC 100440) (Methanococcus jannaschii)).